A 294-amino-acid chain; its full sequence is MHTRFQAIWSDLSPQLQQALTPYLEQDEFPAMFTAEQVNALKTQLQCNDDELALALLPVAAACAVTPISHFNVGAIARGESGHFYFGANMEFAGAPLQQTVHAEQSAVTHAWLRGESRLVAITVNYTPCGHCRQFMNELNSGTHIAIHLPGRKVATLGDYLPDSFGPKDLNITTLLMDKVNHGYQIDNTSQLAQQALQAINRSHAPYSHSHSGIAVQMKSGKIFQGSYAENAAFNPSMPPLQAALIALNMAGENVMDIESAILIEKADSLLTQWDATQATLTALGCRQIQRVTL.

CMP/dCMP-type deaminase domains lie at 48–168 (NDDE…FGPK) and 187–294 (DNTS…RVTL). Residue 89–91 (NME) coordinates substrate. His-102 contributes to the Zn(2+) binding site. Glu-104 functions as the Proton donor in the catalytic mechanism. The Zn(2+) site is built by Cys-129 and Cys-132.

The protein belongs to the cytidine and deoxycytidylate deaminase family. As to quaternary structure, homodimer. Requires Zn(2+) as cofactor.

It carries out the reaction cytidine + H2O + H(+) = uridine + NH4(+). The catalysed reaction is 2'-deoxycytidine + H2O + H(+) = 2'-deoxyuridine + NH4(+). This enzyme scavenges exogenous and endogenous cytidine and 2'-deoxycytidine for UMP synthesis. This is Cytidine deaminase from Proteus mirabilis (strain HI4320).